A 594-amino-acid chain; its full sequence is UvrABC system protein C (594 aa).

One can recognise a GIY-YIG domain in the interval 13–99; it reads NSSGVYQYFD…IKQLKPKYNI (87 aa). The region spanning 205–240 is the UVR domain; that stretch reads DRLIKELELKMERLSSNLRFEEALIYRDRIAKIQKI.

It belongs to the UvrC family. In terms of assembly, interacts with UvrB in an incision complex.

Its subcellular location is the cytoplasm. In terms of biological role, the UvrABC repair system catalyzes the recognition and processing of DNA lesions. UvrC both incises the 5' and 3' sides of the lesion. The N-terminal half is responsible for the 3' incision and the C-terminal half is responsible for the 5' incision. This Helicobacter pylori (strain G27) protein is UvrABC system protein C.